The primary structure comprises 93 residues: Small ribosomal subunit protein uS19 (93 aa).

This sequence belongs to the universal ribosomal protein uS19 family.

Protein S19 forms a complex with S13 that binds strongly to the 16S ribosomal RNA. In Phytoplasma australiense, this protein is Small ribosomal subunit protein uS19.